A 447-amino-acid chain; its full sequence is Protein CLT1, chloroplastic (447 aa).

The N-terminal 48 residues, 1-48 (MATTSSDRLIAGLTASIGSIESRYANPAQSVSLICRNQINGAPPIVLR), are a transit peptide targeting the chloroplast. The next 10 membrane-spanning stretches (helical) occupy residues 103 to 123 (MEIV…RVLY), 135 to 155 (FFLA…ILYF), 172 to 192 (LPFL…MAAA), 200 to 220 (TTVL…IFLG), 228 to 248 (ILGC…GSGA), 256 to 276 (GILW…DTVM), 304 to 324 (IFQV…WGIP), 351 to 371 (GAPL…ISLL), 387 to 407 (TVSV…LGVA), and 413 to 433 (GFVA…WTPS).

It belongs to the CRT-like transporter family.

Its subcellular location is the plastid. It is found in the chloroplast membrane. Its function is as follows. Involved in thiol transport from the plastid to the cytosol. Transports probably both glutathione (GSH) and its precursor, gamma-glutamylcysteine (gamma-EC). Exhibits some functional redundancy with CLT3 in maintaining the root GSH pool. This is Protein CLT1, chloroplastic from Arabidopsis thaliana (Mouse-ear cress).